Consider the following 159-residue polypeptide: 6,7-dimethyl-8-ribityllumazine synthase (159 aa).

5-amino-6-(D-ribitylamino)uracil is bound by residues Phe-22, 57-59 (TYE), and 81-83 (TII). 86 to 87 (ST) contacts (2S)-2-hydroxy-3-oxobutyl phosphate. His-89 (proton donor) is an active-site residue. Met-114 contacts 5-amino-6-(D-ribitylamino)uracil. Arg-128 contributes to the (2S)-2-hydroxy-3-oxobutyl phosphate binding site.

Belongs to the DMRL synthase family. In terms of assembly, forms an icosahedral capsid composed of 60 subunits, arranged as a dodecamer of pentamers.

It carries out the reaction (2S)-2-hydroxy-3-oxobutyl phosphate + 5-amino-6-(D-ribitylamino)uracil = 6,7-dimethyl-8-(1-D-ribityl)lumazine + phosphate + 2 H2O + H(+). It participates in cofactor biosynthesis; riboflavin biosynthesis; riboflavin from 2-hydroxy-3-oxobutyl phosphate and 5-amino-6-(D-ribitylamino)uracil: step 1/2. Catalyzes the formation of 6,7-dimethyl-8-ribityllumazine by condensation of 5-amino-6-(D-ribitylamino)uracil with 3,4-dihydroxy-2-butanone 4-phosphate. This is the penultimate step in the biosynthesis of riboflavin. The polypeptide is 6,7-dimethyl-8-ribityllumazine synthase (Buchnera aphidicola subsp. Schizaphis graminum (strain Sg)).